Reading from the N-terminus, the 349-residue chain is tRNA uridine(34) hydroxylase (349 aa).

Residues 146–240 enclose the Rhodanese domain; that stretch reads DDPDAVFIDM…YARKAREQGL (95 aa). The Cysteine persulfide intermediate role is filled by C200. Residues 314–328 are compositionally biased toward basic and acidic residues; that stretch reads PEEEQRRRRAGRENG. Residues 314-349 form a disordered region; that stretch reads PEEEQRRRRAGRENGNKIFNKSRGRLNTTLGIPDPE.

Belongs to the TrhO family.

The catalysed reaction is uridine(34) in tRNA + AH2 + O2 = 5-hydroxyuridine(34) in tRNA + A + H2O. Catalyzes oxygen-dependent 5-hydroxyuridine (ho5U) modification at position 34 in tRNAs. The chain is tRNA uridine(34) hydroxylase from Cronobacter sakazakii (strain ATCC BAA-894) (Enterobacter sakazakii).